The sequence spans 2178 residues: Genome polyprotein (2178 aa).

Residues 1-20 are disordered; it reads MGAQVSTQKSGSHENQNILT. The N-myristoyl glycine; by host moiety is linked to residue Gly-2. Residues 2 to 1490 lie on the Cytoplasmic side of the membrane; that stretch reads GAQVSTQKSG…AVNQASMIIN (1489 aa). The interval 564–584 is amphipathic alpha-helix; sequence ALTEGLSDELEEVIVEKTKQT. Catalysis depends on for protease 2A activity residues His-875 and Asp-893. 2 residues coordinate Zn(2+): Cys-910 and Cys-912. Cys-964 serves as the catalytic For protease 2A activity. The Zn(2+) site is built by Cys-970 and His-972. Residues 1100 to 1172 form a membrane-binding region; it reads NDGWFRKFND…HDSNPTQEKR (73 aa). An oligomerization region spans residues 1100–1238; the sequence is NDGWFRKFND…TPGSGKSLTT (139 aa). Residues 1121–1125 form an RNA-binding region; the sequence is ANKIS. The 157-residue stretch at 1204–1360 folds into the SF3 helicase domain; the sequence is KNKITNYMQF…STYTKNGKLN (157 aa). Residues Cys-1368, Cys-1371, Cys-1380, and Cys-1385 each coordinate Zn(2+). A C4-type zinc finger spans residues 1368–1385; it reads CKDCHQPSNFKKCCPLVC. Residues 1412 to 1419 form an RNA-binding region; that stretch reads DYKNKVKI. The oligomerization stretch occupies residues 1423–1428; it reads LEVLFQ. An intramembrane segment occupies 1491-1506; it reads TILMFVSTLGIVYVIY. Topologically, residues 1507-2178 are cytoplasmic; sequence KLFAQTQGPY…VLRRRWLDLF (672 aa). At Tyr-1516 the chain carries O-(5'-phospho-RNA)-tyrosine. A Peptidase C3 domain is found at 1537–1714; that stretch reads GPNTEFALSL…FSAQLKKQYF (178 aa). Catalysis depends on for protease 3C activity residues His-1576, Glu-1607, and Cys-1682. A RdRp catalytic domain is found at 1946–2059; that stretch reads HLMAFDYSNF…SYPFELDSNI (114 aa). Residues Asp-1951 and Asp-2045 each contribute to the Mg(2+) site.

This sequence belongs to the picornaviruses polyprotein family. Interacts with capsid protein VP1 and capsid protein VP3 to form heterotrimeric protomers. As to quaternary structure, interacts with capsid protein VP0, and capsid protein VP3 to form heterotrimeric protomers. Five protomers subsequently associate to form pentamers which serve as building blocks for the capsid. Interacts with capsid protein VP2, capsid protein VP3 and capsid protein VP4 following cleavage of capsid protein VP0. In terms of assembly, interacts with capsid protein VP1 and capsid protein VP3 in the mature capsid. Interacts with capsid protein VP0 and capsid protein VP1 to form heterotrimeric protomers. Five protomers subsequently associate to form pentamers which serve as building blocks for the capsid. Interacts with capsid protein VP4 in the mature capsid. Interacts with protein 2C; this interaction may be important for virion morphogenesis. As to quaternary structure, interacts with capsid protein VP1 and capsid protein VP3. In terms of assembly, homodimer. Homohexamer; forms a hexameric ring structure with 6-fold symmetry characteristic of AAA+ ATPases. Interacts (via N-terminus) with host RTN3 (via reticulon domain); this interaction is important for viral replication. Interacts with capsid protein VP3; this interaction may be important for virion morphogenesis. As to quaternary structure, interacts with protein 3CD. In terms of assembly, homodimer. Interacts with host GBF1. Interacts (via GOLD domain) with host ACBD3 (via GOLD domain); this interaction allows the formation of a viral protein 3A/ACBD3 heterotetramer with a 2:2 stoichiometry, which will stimulate the recruitment of host PI4KB in order to synthesize PI4P at the viral RNA replication sites. Interacts with RNA-directed RNA polymerase. As to quaternary structure, interacts with protein 3AB and with RNA-directed RNA polymerase. In terms of assembly, interacts with Viral protein genome-linked and with protein 3CD. The cofactor is Mg(2+). In terms of processing, specific enzymatic cleavages in vivo by the viral proteases yield processing intermediates and the mature proteins. Myristoylation is required for the formation of pentamers during virus assembly. Further assembly of 12 pentamers and a molecule of genomic RNA generates the provirion. Post-translationally, during virion maturation, immature virions are rendered infectious following cleavage of VP0 into VP4 and VP2. This maturation seems to be an autocatalytic event triggered by the presence of RNA in the capsid and it is followed by a conformational change infectious virion. In terms of processing, myristoylation is required during RNA encapsidation and formation of the mature virus particle. VPg is uridylylated by the polymerase into VPg-pUpU. This acts as a nucleotide-peptide primer for the genomic RNA replication.

It is found in the virion. Its subcellular location is the host cytoplasm. It localises to the host cytoplasmic vesicle membrane. The protein localises to the host nucleus. The enzyme catalyses a ribonucleoside 5'-triphosphate + H2O = a ribonucleoside 5'-diphosphate + phosphate + H(+). It carries out the reaction Selective cleavage of Tyr-|-Gly bond in the picornavirus polyprotein.. It catalyses the reaction RNA(n) + a ribonucleoside 5'-triphosphate = RNA(n+1) + diphosphate. The catalysed reaction is Selective cleavage of Gln-|-Gly bond in the poliovirus polyprotein. In other picornavirus reactions Glu may be substituted for Gln, and Ser or Thr for Gly.. With respect to regulation, replication or transcription is subject to high level of random mutations by the nucleotide analog ribavirin. Forms an icosahedral capsid of pseudo T=3 symmetry with capsid proteins VP2 and VP3. The capsid is 300 Angstroms in diameter, composed of 60 copies of each capsid protein and enclosing the viral positive strand RNA genome. Capsid protein VP1 mainly forms the vertices of the capsid. Capsid protein VP1 interacts with host cell receptor to provide virion attachment to target host cells. This attachment induces virion internalization. Tyrosine kinases are probably involved in the entry process. After binding to its receptor, the capsid undergoes conformational changes. Capsid protein VP1 N-terminus (that contains an amphipathic alpha-helix) and capsid protein VP4 are externalized. Together, they shape a pore in the host membrane through which viral genome is translocated to host cell cytoplasm. Its function is as follows. Forms an icosahedral capsid of pseudo T=3 symmetry with capsid proteins VP2 and VP3. The capsid is 300 Angstroms in diameter, composed of 60 copies of each capsid protein and enclosing the viral positive strand RNA genome. Functionally, lies on the inner surface of the capsid shell. After binding to the host receptor, the capsid undergoes conformational changes. Capsid protein VP4 is released, Capsid protein VP1 N-terminus is externalized, and together, they shape a pore in the host membrane through which the viral genome is translocated into the host cell cytoplasm. In terms of biological role, component of immature procapsids, which is cleaved into capsid proteins VP4 and VP2 after maturation. Allows the capsid to remain inactive before the maturation step. Cysteine protease that cleaves viral polyprotein and specific host proteins. It is responsible for the autocatalytic cleavage between the P1 and P2 regions, which is the first cleavage occurring in the polyprotein. Also cleaves the host translation initiation factor EIF4G1, in order to shut down the capped cellular mRNA translation. Inhibits the host nucleus-cytoplasm protein and RNA trafficking by cleaving host members of the nuclear pores. Counteracts stress granule formation probably by antagonizing its assembly or promoting its dissassembly. Its function is as follows. Plays an essential role in the virus replication cycle by acting as a viroporin. Creates a pore in the host endoplasmic reticulum and as a consequence releases Ca2+ in the cytoplasm of infected cell. In turn, high levels of cytoplasmic calcium may trigger membrane trafficking and transport of viral ER-associated proteins to viroplasms, sites of viral genome replication. Functionally, induces and associates with structural rearrangements of intracellular membranes. Displays RNA-binding, nucleotide binding and NTPase activities. May play a role in virion morphogenesis and viral RNA encapsidation by interacting with the capsid protein VP3. In terms of biological role, localizes the viral replication complex to the surface of membranous vesicles. Together with protein 3CD binds the Cis-Active RNA Element (CRE) which is involved in RNA synthesis initiation. Acts as a cofactor to stimulate the activity of 3D polymerase, maybe through a nucleid acid chaperone activity. Localizes the viral replication complex to the surface of membranous vesicles. It inhibits host cell endoplasmic reticulum-to-Golgi apparatus transport and causes the disassembly of the Golgi complex, possibly through GBF1 interaction. This would result in depletion of MHC, trail receptors and IFN receptors at the host cell surface. Plays an essential role in viral RNA replication by recruiting ACBD3 and PI4KB at the viral replication sites, thereby allowing the formation of the rearranged membranous structures where viral replication takes place. Its function is as follows. Acts as a primer for viral RNA replication and remains covalently bound to viral genomic RNA. VPg is uridylylated prior to priming replication into VPg-pUpU. The oriI viral genomic sequence may act as a template for this. The VPg-pUpU is then used as primer on the genomic RNA poly(A) by the RNA-dependent RNA polymerase to replicate the viral genome. During genome replication, the VPg-RNA linkage is removed by the host TDP2, thereby accelerating replication. During the late stage of the replication cycle, host TDP2 is excluded from sites of viral RNA synthesis and encapsidation, allowing for the generation of progeny virions. Functionally, involved in the viral replication complex and viral polypeptide maturation. It exhibits protease activity with a specificity and catalytic efficiency that is different from protease 3C. Protein 3CD lacks polymerase activity. Protein 3CD binds to the 5'UTR of the viral genome. In terms of biological role, replicates the viral genomic RNA on the surface of intracellular membranes. May form linear arrays of subunits that propagate along a strong head-to-tail interaction called interface-I. Covalently attaches UMP to a tyrosine of VPg, which is used to prime RNA synthesis. The positive stranded RNA genome is first replicated at virus induced membranous vesicles, creating a dsRNA genomic replication form. This dsRNA is then used as template to synthesize positive stranded RNA genomes. ss(+)RNA genomes are either translated, replicated or encapsidated. Major viral protease that mediates proteolytic processing of the polyprotein. Cleaves host EIF5B, contributing to host translation shutoff. Also cleaves host PABPC1, contributing to host translation shutoff. Cleaves host NLRP1, triggers host N-glycine-mediated degradation of the autoinhibitory NLRP1 N-terminal fragment. This is Genome polyprotein from Homo sapiens (Human).